The chain runs to 482 residues: UDP-N-acetylmuramate--L-alanine ligase (482 aa).

Residues 1–26 (MPQLPMTDSAPLPTPAPSSPAQPSAQ) form a disordered region. An ATP-binding site is contributed by 140–146 (GTHGKTT).

This sequence belongs to the MurCDEF family.

It is found in the cytoplasm. It carries out the reaction UDP-N-acetyl-alpha-D-muramate + L-alanine + ATP = UDP-N-acetyl-alpha-D-muramoyl-L-alanine + ADP + phosphate + H(+). The protein operates within cell wall biogenesis; peptidoglycan biosynthesis. In terms of biological role, cell wall formation. The chain is UDP-N-acetylmuramate--L-alanine ligase from Deinococcus radiodurans (strain ATCC 13939 / DSM 20539 / JCM 16871 / CCUG 27074 / LMG 4051 / NBRC 15346 / NCIMB 9279 / VKM B-1422 / R1).